The following is a 362-amino-acid chain: 3-dehydroquinate synthase (362 aa).

Residues 71–76, 105–109, 129–130, Lys-142, Lys-151, and 169–172 contribute to the NAD(+) site; these read DGEQYK, GVVGD, TT, and CLKT. Glu-184, His-248, and His-265 together coordinate Zn(2+).

The protein belongs to the sugar phosphate cyclases superfamily. Dehydroquinate synthase family. Co(2+) serves as cofactor. Requires Zn(2+) as cofactor. It depends on NAD(+) as a cofactor.

It is found in the cytoplasm. The catalysed reaction is 7-phospho-2-dehydro-3-deoxy-D-arabino-heptonate = 3-dehydroquinate + phosphate. It functions in the pathway metabolic intermediate biosynthesis; chorismate biosynthesis; chorismate from D-erythrose 4-phosphate and phosphoenolpyruvate: step 2/7. Catalyzes the conversion of 3-deoxy-D-arabino-heptulosonate 7-phosphate (DAHP) to dehydroquinate (DHQ). The sequence is that of 3-dehydroquinate synthase from Yersinia pseudotuberculosis serotype O:1b (strain IP 31758).